The sequence spans 461 residues: Ornithine decarboxylase (461 aa).

Lys69 is subject to N6-(pyridoxal phosphate)lysine. Pyridoxal 5'-phosphate contacts are provided by residues Ser200, Gly237, and 274-277 (EPGR). The residue at position 303 (Ser303) is a Phosphoserine; by CK2. 331–332 (YD) is a substrate binding site. Cys360 (proton donor; shared with dimeric partner) is an active-site residue. Cys360 bears the S-nitrosocysteine mark. Asp361 is a binding site for substrate. Tyr389 contributes to the pyridoxal 5'-phosphate binding site.

It belongs to the Orn/Lys/Arg decarboxylase class-II family. As to quaternary structure, homodimer. Only the dimer is catalytically active, as the active sites are constructed of residues from both monomers. Does not form a heterodimer with AZIN2. It depends on pyridoxal 5'-phosphate as a cofactor. As to expression, expressed during testis development in the outer part of the seminiferous tubules.

It catalyses the reaction L-ornithine + H(+) = putrescine + CO2. The protein operates within amine and polyamine biosynthesis; putrescine biosynthesis via L-ornithine pathway; putrescine from L-ornithine: step 1/1. Inhibited by antizymes (AZs) OAZ1, OAZ2 and OAZ3 in response to polyamine levels. AZs inhibit the assembly of the functional homodimer by binding to ODC monomers. Additionally, OAZ1 targets ODC monomers for ubiquitin-independent proteolytic destruction by the 26S proteasome. Its function is as follows. Catalyzes the first and rate-limiting step of polyamine biosynthesis that converts ornithine into putrescine, which is the precursor for the polyamines, spermidine and spermine. Polyamines are essential for cell proliferation and are implicated in cellular processes, ranging from DNA replication to apoptosis. This chain is Ornithine decarboxylase (Odc1), found in Mus musculus (Mouse).